A 630-amino-acid chain; its full sequence is Probable potassium transport system protein Kup (630 aa).

Transmembrane regions (helical) follow at residues 17–37 (LAIAAIGVVFGDIGTSPLYSL), 51–71 (PSAILGVISLLFWAIILVVGI), 105–125 (ITGLMMALGIFGACMFYGDAV), 144–164 (PQLSHLVLPITIVILIALFWI), 175–195 (LFGPIMLLWFVTIAALGIYHI), 218–238 (VLLAYVVLGSVVLVLTGAEAL), 255–275 (YVLVMPSLVLNYFGQGALLLL), 283–303 (PFFLLAPQWAALPLVVLSTVA), 344–364 (IYVPVVNWLLLFVILCIVIGF), 374–394 (YGIAVTATMVITTILAAVVMV), 402–422 (LLVAMIIGVFLVIDLGFFGAN), and 428–448 (QGGWLPLGIGALLFFLLMTWY).

The protein belongs to the HAK/KUP transporter (TC 2.A.72) family.

It localises to the cell inner membrane. It carries out the reaction K(+)(in) + H(+)(in) = K(+)(out) + H(+)(out). Functionally, transport of potassium into the cell. Likely operates as a K(+):H(+) symporter. This chain is Probable potassium transport system protein Kup, found in Burkholderia mallei (strain NCTC 10247).